A 199-amino-acid chain; its full sequence is Protein GrpE (199 aa).

Residues 1–17 (MSDSDNNTKSQQNNPTQ) show a composition bias toward polar residues. The interval 1 to 36 (MSDSDNNTKSQQNNPTQTDEKSGEEIQSNQKPQRKF) is disordered.

The protein belongs to the GrpE family. Homodimer.

It localises to the cytoplasm. Functionally, participates actively in the response to hyperosmotic and heat shock by preventing the aggregation of stress-denatured proteins, in association with DnaK and GrpE. It is the nucleotide exchange factor for DnaK and may function as a thermosensor. Unfolded proteins bind initially to DnaJ; upon interaction with the DnaJ-bound protein, DnaK hydrolyzes its bound ATP, resulting in the formation of a stable complex. GrpE releases ADP from DnaK; ATP binding to DnaK triggers the release of the substrate protein, thus completing the reaction cycle. Several rounds of ATP-dependent interactions between DnaJ, DnaK and GrpE are required for fully efficient folding. The polypeptide is Protein GrpE (Ehrlichia canis (strain Jake)).